A 220-amino-acid chain; its full sequence is Deoxyribose-phosphate aldolase (220 aa).

Asp89 (proton donor/acceptor) is an active-site residue. Residue Lys151 is the Schiff-base intermediate with acetaldehyde of the active site. The active-site Proton donor/acceptor is Lys180.

This sequence belongs to the DeoC/FbaB aldolase family. DeoC type 1 subfamily.

It localises to the cytoplasm. The catalysed reaction is 2-deoxy-D-ribose 5-phosphate = D-glyceraldehyde 3-phosphate + acetaldehyde. It participates in carbohydrate degradation; 2-deoxy-D-ribose 1-phosphate degradation; D-glyceraldehyde 3-phosphate and acetaldehyde from 2-deoxy-alpha-D-ribose 1-phosphate: step 2/2. Its function is as follows. Catalyzes a reversible aldol reaction between acetaldehyde and D-glyceraldehyde 3-phosphate to generate 2-deoxy-D-ribose 5-phosphate. This Lactococcus lactis subsp. cremoris (strain SK11) protein is Deoxyribose-phosphate aldolase.